Reading from the N-terminus, the 213-residue chain is MSKLSDIRREYTLGGLHKEDLPGDPIELFSKWMEQARDSEVLSDPTAMSVATVDADGQPFQRIVLLKRFDKGGFVFFTNLESRKSQQIAINSKVSLLFPWHSLERQVAITGEAEPLSTAEVMKYFITRPKESQIAAWVSKQSSKISARQALESKFAEMKAKFSQGEVPLPKFWGGYIVKPTSIEFWQGGEHRLHDRFLYSKENSGWDISRLAP.

Substrate-binding positions include 8–11 and lysine 67; that span reads RREY. Residues 62–67, 77–78, arginine 83, lysine 84, and glutamine 106 contribute to the FMN site; these read RIVLLK and FT. The substrate site is built by tyrosine 124, arginine 128, and serine 132. Residues 141 to 142 and tryptophan 186 contribute to the FMN site; that span reads QS. A substrate-binding site is contributed by 192–194; the sequence is RLH. Arginine 196 contributes to the FMN binding site.

Belongs to the pyridoxamine 5'-phosphate oxidase family. As to quaternary structure, homodimer. The cofactor is FMN.

It carries out the reaction pyridoxamine 5'-phosphate + O2 + H2O = pyridoxal 5'-phosphate + H2O2 + NH4(+). It catalyses the reaction pyridoxine 5'-phosphate + O2 = pyridoxal 5'-phosphate + H2O2. It functions in the pathway cofactor metabolism; pyridoxal 5'-phosphate salvage; pyridoxal 5'-phosphate from pyridoxamine 5'-phosphate: step 1/1. The protein operates within cofactor metabolism; pyridoxal 5'-phosphate salvage; pyridoxal 5'-phosphate from pyridoxine 5'-phosphate: step 1/1. Functionally, catalyzes the oxidation of either pyridoxine 5'-phosphate (PNP) or pyridoxamine 5'-phosphate (PMP) into pyridoxal 5'-phosphate (PLP). In Shewanella sediminis (strain HAW-EB3), this protein is Pyridoxine/pyridoxamine 5'-phosphate oxidase.